Consider the following 492-residue polypeptide: Protein GvpD2 (492 aa).

Residue 39 to 46 coordinates ATP; sequence GAPGTGKT. Residues 355–368 show a composition bias toward basic and acidic residues; the sequence is RDHDDAVDPDRLPG. The tract at residues 355–379 is disordered; it reads RDHDDAVDPDRLPGHDTTPTEHGTL.

It belongs to the gas vesicle GvpD family. Homodimer. Interacts with GvpE, also with GvpE from H.mediterranei.

It localises to the cytoplasm. Functionally, causes a decrease in the amount of GvpE protein. Gas vesicles are hollow, gas filled proteinaceous nanostructures found in several microbial planktonic microorganisms. They allow positioning of halobacteria at the optimal depth for growth in the poorly aerated, shallow brine pools of their habitat. In terms of biological role, expression of 2 c-vac DNA fragments containing 2 divergently transcribed regions (gvpE-gvpF-gvpG-gvpH-gvpI-gvpJ-gvpK-gvpL-gvpM and gvpA-gvpC-gvpN-gvpO) allows H.volcanii to produce gas vesicles. This is Protein GvpD2 from Halobacterium salinarum (strain ATCC 700922 / JCM 11081 / NRC-1) (Halobacterium halobium).